Reading from the N-terminus, the 241-residue chain is Interleukin-6 (241 aa).

Positions 1 to 26 (MNSFTSALRPGPLGCSLALLLVVATA) are cleaved as a signal peptide. Residues 32 to 51 (PVREDSNTKASPDKTLTPPG) are disordered. 2 disulfide bridges follow: Cys72–Cys78 and Cys101–Cys111. The N-linked (GlcNAc...) asparagine glycan is linked to Asn108.

It belongs to the IL-6 superfamily. As to quaternary structure, component of a hexamer of two molecules each of IL6, IL6R and IL6ST; first binds to IL6R to associate with the signaling subunit IL6ST. Interacts with IL6R (via the N-terminal ectodomain); this interaction may be affected by IL6R-binding with SORL1, hence decreasing IL6 cis signaling. Interacts with SORL1 (via the N-terminal ectodomain); this interaction leads to IL6 internalization and lysosomal degradation. May form a trimeric complex with the soluble SORL1 ectodomain and soluble IL6R receptor; this interaction might stabilize circulating IL6, hence promoting IL6 trans signaling.

It is found in the secreted. Its function is as follows. Cytokine with a wide variety of biological functions in immunity, tissue regeneration, and metabolism. Binds to IL6R, then the complex associates to the signaling subunit IL6ST/gp130 to trigger the intracellular IL6-signaling pathway. The interaction with the membrane-bound IL6R and IL6ST stimulates 'classic signaling', whereas the binding of IL6 and soluble IL6R to IL6ST stimulates 'trans-signaling'. Alternatively, 'cluster signaling' occurs when membrane-bound IL6:IL6R complexes on transmitter cells activate IL6ST receptors on neighboring receiver cells. In terms of biological role, IL6 is a potent inducer of the acute phase response. Rapid production of IL6 contributes to host defense during infection and tissue injury, but excessive IL6 synthesis is involved in disease pathology. In the innate immune response, is synthesized by myeloid cells, such as macrophages and dendritic cells, upon recognition of pathogens through toll-like receptors (TLRs) at the site of infection or tissue injury. In the adaptive immune response, is required for the differentiation of B cells into immunoglobulin-secreting cells. Plays a major role in the differentiation of CD4(+) T cell subsets. Essential factor for the development of T follicular helper (Tfh) cells that are required for the induction of germinal-center formation. Required to drive naive CD4(+) T cells to the Th17 lineage. Also required for proliferation of myeloma cells and the survival of plasmablast cells. Acts as an essential factor in bone homeostasis and on vessels directly or indirectly by induction of VEGF, resulting in increased angiogenesis activity and vascular permeability. Induces, through 'trans-signaling' and synergistically with IL1B and TNF, the production of VEGF. Involved in metabolic controls, is discharged into the bloodstream after muscle contraction increasing lipolysis and improving insulin resistance. 'Trans-signaling' in central nervous system also regulates energy and glucose homeostasis. Mediates, through GLP-1, crosstalk between insulin-sensitive tissues, intestinal L cells and pancreatic islets to adapt to changes in insulin demand. Also acts as a myokine. Plays a protective role during liver injury, being required for maintenance of tissue regeneration. Also has a pivotal role in iron metabolism by regulating HAMP/hepcidin expression upon inflammation or bacterial infection. Through activation of IL6ST-YAP-NOTCH pathway, induces inflammation-induced epithelial regeneration. This chain is Interleukin-6 (IL6), found in Oryctolagus cuniculus (Rabbit).